The primary structure comprises 401 residues: Argininosuccinate synthase (401 aa).

ATP is bound by residues 9–17 (AYSGGLDTS) and Ala-35. L-citrulline is bound at residue Tyr-86. Gly-116 provides a ligand contact to ATP. Thr-118, Asn-122, and Asp-123 together coordinate L-aspartate. Residue Asn-122 coordinates L-citrulline. Residues Arg-126, Ser-175, Ser-184, Glu-261, and Tyr-273 each coordinate L-citrulline.

It belongs to the argininosuccinate synthase family. Type 1 subfamily. Homotetramer.

It localises to the cytoplasm. It carries out the reaction L-citrulline + L-aspartate + ATP = 2-(N(omega)-L-arginino)succinate + AMP + diphosphate + H(+). Its pathway is amino-acid biosynthesis; L-arginine biosynthesis; L-arginine from L-ornithine and carbamoyl phosphate: step 2/3. This chain is Argininosuccinate synthase, found in Aquifex aeolicus (strain VF5).